Here is a 104-residue protein sequence, read N- to C-terminus: Ribonuclease P protein component 4 (104 aa).

Zn(2+) contacts are provided by Cys63, Cys66, Cys89, and Cys92.

Belongs to the eukaryotic/archaeal RNase P protein component 4 family. In terms of assembly, consists of a catalytic RNA component and at least 4-5 protein subunits. Zn(2+) serves as cofactor.

Its subcellular location is the cytoplasm. It catalyses the reaction Endonucleolytic cleavage of RNA, removing 5'-extranucleotides from tRNA precursor.. Its function is as follows. Part of ribonuclease P, a protein complex that generates mature tRNA molecules by cleaving their 5'-ends. This chain is Ribonuclease P protein component 4, found in Methanosphaera stadtmanae (strain ATCC 43021 / DSM 3091 / JCM 11832 / MCB-3).